The primary structure comprises 304 residues: UDP-3-O-acyl-N-acetylglucosamine deacetylase (304 aa).

3 residues coordinate Zn(2+): His-78, His-237, and Asp-241. Residue His-264 is the Proton donor of the active site.

This sequence belongs to the LpxC family. It depends on Zn(2+) as a cofactor.

It catalyses the reaction a UDP-3-O-[(3R)-3-hydroxyacyl]-N-acetyl-alpha-D-glucosamine + H2O = a UDP-3-O-[(3R)-3-hydroxyacyl]-alpha-D-glucosamine + acetate. The protein operates within glycolipid biosynthesis; lipid IV(A) biosynthesis; lipid IV(A) from (3R)-3-hydroxytetradecanoyl-[acyl-carrier-protein] and UDP-N-acetyl-alpha-D-glucosamine: step 2/6. Catalyzes the hydrolysis of UDP-3-O-myristoyl-N-acetylglucosamine to form UDP-3-O-myristoylglucosamine and acetate, the committed step in lipid A biosynthesis. The protein is UDP-3-O-acyl-N-acetylglucosamine deacetylase of Alcanivorax borkumensis (strain ATCC 700651 / DSM 11573 / NCIMB 13689 / SK2).